The primary structure comprises 162 residues: MADPDRYNKMFPVSWEQLHRDTRALSWRLMERGPFKGIVAITRGGLVPAAILARELEVRLVDTICIASYDWKSQGGISVLKGVEGDGEGWLIVDDLVDTGTTARAVREMLPKAHFATVYAKPSGRPVVDTYITEVSQDTWILFPWDSEIQYVQPLVNRRQEG.

5-phospho-alpha-D-ribose 1-diphosphate-binding positions include arginine 43–glycine 44 and aspartate 94–threonine 102. Residue aspartate 95 coordinates Mg(2+). Guanine contacts are provided by aspartate 98 and isoleucine 141. Aspartate 98 and isoleucine 141 together coordinate xanthine. Residues aspartate 98–threonine 102 and tryptophan 140–isoleucine 141 each bind GMP.

Belongs to the purine/pyrimidine phosphoribosyltransferase family. XGPT subfamily. As to quaternary structure, homotetramer. The cofactor is Mg(2+).

The protein localises to the cell inner membrane. It catalyses the reaction GMP + diphosphate = guanine + 5-phospho-alpha-D-ribose 1-diphosphate. The catalysed reaction is XMP + diphosphate = xanthine + 5-phospho-alpha-D-ribose 1-diphosphate. It carries out the reaction IMP + diphosphate = hypoxanthine + 5-phospho-alpha-D-ribose 1-diphosphate. Its pathway is purine metabolism; GMP biosynthesis via salvage pathway; GMP from guanine: step 1/1. It participates in purine metabolism; XMP biosynthesis via salvage pathway; XMP from xanthine: step 1/1. Its function is as follows. Purine salvage pathway enzyme that catalyzes the transfer of the ribosyl-5-phosphate group from 5-phospho-alpha-D-ribose 1-diphosphate (PRPP) to the N9 position of the 6-oxopurines guanine and xanthine to form the corresponding ribonucleotides GMP (guanosine 5'-monophosphate) and XMP (xanthosine 5'-monophosphate), with the release of PPi. To a lesser extent, also acts on hypoxanthine. This is Xanthine-guanine phosphoribosyltransferase from Oleidesulfovibrio alaskensis (strain ATCC BAA-1058 / DSM 17464 / G20) (Desulfovibrio alaskensis).